The primary structure comprises 185 residues: Ribosome maturation factor RimP (185 aa).

The disordered stretch occupies residues 162-185 (VRLERAADGAPERGGDRGDTEESR).

It belongs to the RimP family.

It localises to the cytoplasm. Its function is as follows. Required for maturation of 30S ribosomal subunits. This Saccharopolyspora erythraea (strain ATCC 11635 / DSM 40517 / JCM 4748 / NBRC 13426 / NCIMB 8594 / NRRL 2338) protein is Ribosome maturation factor RimP.